We begin with the raw amino-acid sequence, 128 residues long: MIVGLGTDLVEIARMERLLARHGDRALTRLLHVQERAECPRAPDRAARFLARRFAAKEAAAKALGTGIANGIRFADLQVSHDDRGRPLLNLHGEARQHAQALGATGHHLSISDEQTHALAFVVLESSD.

Positions 8 and 58 each coordinate Mg(2+).

Belongs to the P-Pant transferase superfamily. AcpS family. Mg(2+) is required as a cofactor.

It is found in the cytoplasm. It carries out the reaction apo-[ACP] + CoA = holo-[ACP] + adenosine 3',5'-bisphosphate + H(+). Functionally, transfers the 4'-phosphopantetheine moiety from coenzyme A to a Ser of acyl-carrier-protein. The chain is Holo-[acyl-carrier-protein] synthase from Alkalilimnicola ehrlichii (strain ATCC BAA-1101 / DSM 17681 / MLHE-1).